We begin with the raw amino-acid sequence, 265 residues long: uncharacterized protein (265 aa).

6 residues coordinate a divalent metal cation: H7, H9, E94, H130, H155, and D205.

It belongs to the metallo-dependent hydrolases superfamily. TatD-type hydrolase family. It depends on a divalent metal cation as a cofactor.

This is an uncharacterized protein from Escherichia coli O157:H7.